The following is a 116-amino-acid chain: uncharacterized protein (116 aa).

This is an uncharacterized protein from Aquifex aeolicus (strain VF5).